Reading from the N-terminus, the 303-residue chain is Ferrochelatase (303 aa).

Positions 185 and 262 each coordinate Fe cation.

It belongs to the ferrochelatase family.

It localises to the cytoplasm. The catalysed reaction is heme b + 2 H(+) = protoporphyrin IX + Fe(2+). It functions in the pathway porphyrin-containing compound metabolism; protoheme biosynthesis; protoheme from protoporphyrin-IX: step 1/1. Its function is as follows. Catalyzes the ferrous insertion into protoporphyrin IX. The protein is Ferrochelatase of Campylobacter jejuni subsp. jejuni serotype O:2 (strain ATCC 700819 / NCTC 11168).